The chain runs to 387 residues: Lipid-A-disaccharide synthase (387 aa).

It belongs to the LpxB family.

It catalyses the reaction a lipid X + a UDP-2-N,3-O-bis[(3R)-3-hydroxyacyl]-alpha-D-glucosamine = a lipid A disaccharide + UDP + H(+). It functions in the pathway bacterial outer membrane biogenesis; LPS lipid A biosynthesis. Its function is as follows. Condensation of UDP-2,3-diacylglucosamine and 2,3-diacylglucosamine-1-phosphate to form lipid A disaccharide, a precursor of lipid A, a phosphorylated glycolipid that anchors the lipopolysaccharide to the outer membrane of the cell. In Nitrosococcus oceani (strain ATCC 19707 / BCRC 17464 / JCM 30415 / NCIMB 11848 / C-107), this protein is Lipid-A-disaccharide synthase.